We begin with the raw amino-acid sequence, 679 residues long: Recombination repair protein 1 (679 aa).

A disordered region spans residues 1 to 407 (MPRVKAVKKQ…TKKAKKAETK (407 aa)). Positions 45 to 55 (AKGKPRARKAT) are enriched in basic residues. The segment covering 106–116 (ATAEAEPEPKV) has biased composition (basic and acidic residues). A phosphothreonine mark is found at T133 and T140. S142 is modified (phosphoserine). 2 stretches are compositionally biased toward basic and acidic residues: residues 179–189 (EPPKQRARKEA) and 203–214 (SKEKVQKAETAA). S258 bears the Phosphoserine mark. Basic and acidic residues predominate over residues 312 to 347 (KKEGKEPAPGKKQKKSADKENGVVEEEAKPSTETKP). Residues 428-679 (KICSWNVAGL…HCPITIFFNI (252 aa)) form an AP endonuclease region. E461 is a binding site for Mg(2+). Y533 is an active-site residue. Mg(2+) contacts are provided by D572, N574, and D669. The Proton donor/acceptor role is filled by D572.

Belongs to the DNA repair enzymes AP/ExoA family. Interacts with the zeta DNA polymerase complex; interacts (via the N-terminus) with the accessory subunit PolZ2/Rev7 and also interacts with the catalytic component PolZ1, however the interaction with PolZ1 is likely via PolZ2. Requires Mg(2+) as cofactor. The cofactor is Mn(2+).

Its subcellular location is the nucleus. It catalyses the reaction Exonucleolytic cleavage in the 3'- to 5'-direction to yield nucleoside 5'-phosphates.. Plays a role in the cellular response to oxidative stress by promoting DNA repair mechanisms such as base excision repair and possibly homologous recombination repair. Functions as an apurinic/apyrimidinic (AP) endodeoxyribonuclease in the DNA base excision repair (BER) pathway of DNA lesions induced by oxidative and alkylating agents. Likely to initiate repair of AP sites in DNA by catalyzing hydrolytic incision of the phosphodiester backbone immediately adjacent to the damage, generating a single-strand break with 5'-deoxyribose phosphate and 3'-hydroxyl ends. Has a 3'-5' exoribonuclease activity on mismatched deoxyribonucleotides at the 3' termini of nicked or gapped DNA molecules during short-patch BER. Has apurinic endonuclease and double-stranded DNA 3'-exonuclease activities and carries out single-stranded DNA renaturation in a Mg(2+)-dependent manner. Activity is more efficient in purine-rich regions of dsDNA than in pyrimidine-rich regions. The sequence is that of Recombination repair protein 1 from Drosophila melanogaster (Fruit fly).